Reading from the N-terminus, the 208-residue chain is Uracil phosphoribosyltransferase (208 aa).

Residues arginine 78, arginine 103, and 130 to 138 (DPMLATGGT) each bind 5-phospho-alpha-D-ribose 1-diphosphate. Residues isoleucine 193 and 198–200 (GDA) each bind uracil. Residue aspartate 199 coordinates 5-phospho-alpha-D-ribose 1-diphosphate.

The protein belongs to the UPRTase family. The cofactor is Mg(2+).

The enzyme catalyses UMP + diphosphate = 5-phospho-alpha-D-ribose 1-diphosphate + uracil. Its pathway is pyrimidine metabolism; UMP biosynthesis via salvage pathway; UMP from uracil: step 1/1. Its activity is regulated as follows. Allosterically activated by GTP. In terms of biological role, catalyzes the conversion of uracil and 5-phospho-alpha-D-ribose 1-diphosphate (PRPP) to UMP and diphosphate. This is Uracil phosphoribosyltransferase from Oleidesulfovibrio alaskensis (strain ATCC BAA-1058 / DSM 17464 / G20) (Desulfovibrio alaskensis).